A 331-amino-acid polypeptide reads, in one-letter code: Pantothenate kinase (331 aa).

ATP is bound at residue 109–116 (GSVAVGKS).

It belongs to the prokaryotic pantothenate kinase family.

Its subcellular location is the cytoplasm. The enzyme catalyses (R)-pantothenate + ATP = (R)-4'-phosphopantothenate + ADP + H(+). It functions in the pathway cofactor biosynthesis; coenzyme A biosynthesis; CoA from (R)-pantothenate: step 1/5. This chain is Pantothenate kinase, found in Rhizobium leguminosarum bv. trifolii (strain WSM2304).